Reading from the N-terminus, the 258-residue chain is Imidazole glycerol phosphate synthase subunit HisF (258 aa).

Residues aspartate 11 and aspartate 130 contribute to the active site.

This sequence belongs to the HisA/HisF family. Heterodimer of HisH and HisF.

The protein resides in the cytoplasm. The catalysed reaction is 5-[(5-phospho-1-deoxy-D-ribulos-1-ylimino)methylamino]-1-(5-phospho-beta-D-ribosyl)imidazole-4-carboxamide + L-glutamine = D-erythro-1-(imidazol-4-yl)glycerol 3-phosphate + 5-amino-1-(5-phospho-beta-D-ribosyl)imidazole-4-carboxamide + L-glutamate + H(+). It functions in the pathway amino-acid biosynthesis; L-histidine biosynthesis; L-histidine from 5-phospho-alpha-D-ribose 1-diphosphate: step 5/9. Functionally, IGPS catalyzes the conversion of PRFAR and glutamine to IGP, AICAR and glutamate. The HisF subunit catalyzes the cyclization activity that produces IGP and AICAR from PRFAR using the ammonia provided by the HisH subunit. This is Imidazole glycerol phosphate synthase subunit HisF from Methylorubrum extorquens (strain PA1) (Methylobacterium extorquens).